Reading from the N-terminus, the 223-residue chain is Fibronectin type III domain-containing protein 10 (223 aa).

Residues 1 to 19 form the signal peptide; it reads MRAPPLLLLLAACAPPSGA. Over 20-179 the chain is Extracellular; it reads AVDPTPPGWE…FTAEPAAMQE (160 aa). The Fibronectin type-III domain occupies 72-168; sequence LASAGGSLRA…VVPPELAECV (97 aa). N-linked (GlcNAc...) asparagine glycosylation is found at Asn-86 and Asn-109. The helical transmembrane segment at 180 to 200 threads the bilayer; the sequence is IVVAMTAVGGSICVMLVVICL. Over 201–223 the chain is Cytoplasmic; that stretch reads LVAYITENLMHPTFRRPSLRRQP.

It is found in the membrane. In Mus musculus (Mouse), this protein is Fibronectin type III domain-containing protein 10 (Fndc10).